The primary structure comprises 329 residues: Very long chain fatty acid elongase 7 (329 aa).

A run of 7 helical transmembrane segments spans residues 26 to 46 (YPLM…AYIV), 66 to 86 (LIVY…ESCI), 114 to 134 (GCWW…FFVM), 146 to 166 (VIHH…TPGG), 170 to 190 (FFGF…MLAA), 205 to 225 (LTVM…QLFF), and 233 to 253 (IGFA…FSNF).

The protein belongs to the ELO family.

Its subcellular location is the membrane. The catalysed reaction is a very-long-chain acyl-CoA + malonyl-CoA + H(+) = a very-long-chain 3-oxoacyl-CoA + CO2 + CoA. In terms of biological role, catalyzes the first and rate-limiting reaction of the four reactions that constitute the long-chain fatty acids elongation cycle. This endoplasmic reticulum-bound enzymatic process allows the addition of 2 carbons to the chain of long- and very long-chain fatty acids (VLCFAs) per cycle. In Drosophila melanogaster (Fruit fly), this protein is Very long chain fatty acid elongase 7.